A 490-amino-acid polypeptide reads, in one-letter code: Lysine--tRNA ligase (490 aa).

2 residues coordinate Mg(2+): glutamate 398 and glutamate 405.

This sequence belongs to the class-II aminoacyl-tRNA synthetase family. In terms of assembly, homodimer. Mg(2+) is required as a cofactor.

The protein localises to the cytoplasm. The enzyme catalyses tRNA(Lys) + L-lysine + ATP = L-lysyl-tRNA(Lys) + AMP + diphosphate. The polypeptide is Lysine--tRNA ligase (Metamycoplasma arthritidis (strain 158L3-1) (Mycoplasma arthritidis)).